The sequence spans 128 residues: D-ribose pyranase (128 aa).

Residue histidine 20 is the Proton donor of the active site. Substrate contacts are provided by residues aspartate 28, histidine 95, and 117-119 (YSN).

The protein belongs to the RbsD / FucU family. RbsD subfamily. In terms of assembly, homodecamer.

It localises to the cytoplasm. It carries out the reaction beta-D-ribopyranose = beta-D-ribofuranose. Its pathway is carbohydrate metabolism; D-ribose degradation; D-ribose 5-phosphate from beta-D-ribopyranose: step 1/2. In terms of biological role, catalyzes the interconversion of beta-pyran and beta-furan forms of D-ribose. This chain is D-ribose pyranase, found in Thermosipho africanus (strain TCF52B).